A 668-amino-acid chain; its full sequence is UvrABC system protein B (668 aa).

One can recognise a Helicase ATP-binding domain in the interval 36–423; sequence DNIKGGEKAQ…TETVVEQIIR (388 aa). 49 to 56 contributes to the ATP binding site; that stretch reads GATGTGKT. A Beta-hairpin motif is present at residues 102–125; that stretch reads YYDYYQPEAYVPSSDTYIEKDSSI. The 167-residue stretch at 440–606 folds into the Helicase C-terminal domain; sequence QMDDLLGEIN…TIKKEIRDLI (167 aa). The region spanning 632–667 is the UVR domain; the sequence is QEAIKKLQKQMHEAAELLDFELAAQIRDMVLELKSM.

It belongs to the UvrB family. As to quaternary structure, forms a heterotetramer with UvrA during the search for lesions. Interacts with UvrC in an incision complex.

It is found in the cytoplasm. Its function is as follows. The UvrABC repair system catalyzes the recognition and processing of DNA lesions. A damage recognition complex composed of 2 UvrA and 2 UvrB subunits scans DNA for abnormalities. Upon binding of the UvrA(2)B(2) complex to a putative damaged site, the DNA wraps around one UvrB monomer. DNA wrap is dependent on ATP binding by UvrB and probably causes local melting of the DNA helix, facilitating insertion of UvrB beta-hairpin between the DNA strands. Then UvrB probes one DNA strand for the presence of a lesion. If a lesion is found the UvrA subunits dissociate and the UvrB-DNA preincision complex is formed. This complex is subsequently bound by UvrC and the second UvrB is released. If no lesion is found, the DNA wraps around the other UvrB subunit that will check the other stand for damage. The sequence is that of UvrABC system protein B from Streptococcus thermophilus (strain CNRZ 1066).